The following is a 189-amino-acid chain: MMQAESGSAEAKGPLPPPVGRKRRGLGILDFLLRLLAIGATLSAAITMGTTNETLQFFTQFFQFKARFYDLSAFIYFVIANAIVGGYLLLSLPISILNIVRPRAASSRVFLIFFDTVMVAVCTSGAAAAVAILYVARKGNSRTNWFAICQRFNSFCNQAIGAVSASFAGVVFLILLVLLSASTLYRRRP.

Over 1-25 (MMQAESGSAEAKGPLPPPVGRKRRG) the chain is Cytoplasmic. A helical membrane pass occupies residues 26–46 (LGILDFLLRLLAIGATLSAAI). At 47–73 (TMGTTNETLQFFTQFFQFKARFYDLSA) the chain is on the extracellular side. N-linked (GlcNAc...) asparagine glycosylation occurs at asparagine 52. A helical membrane pass occupies residues 74–94 (FIYFVIANAIVGGYLLLSLPI). Topologically, residues 95–108 (SILNIVRPRAASSR) are cytoplasmic. A helical transmembrane segment spans residues 109 to 129 (VFLIFFDTVMVAVCTSGAAAA). Residues 130–158 (VAILYVARKGNSRTNWFAICQRFNSFCNQ) are Extracellular-facing. The chain crosses the membrane as a helical span at residues 159–179 (AIGAVSASFAGVVFLILLVLL). The Cytoplasmic segment spans residues 180 to 189 (SASTLYRRRP).

This sequence belongs to the Casparian strip membrane proteins (CASP) family. In terms of assembly, homodimer and heterodimers.

The protein localises to the cell membrane. Its function is as follows. Regulates membrane-cell wall junctions and localized cell wall deposition. Required for establishment of the Casparian strip membrane domain (CSD) and the subsequent formation of Casparian strips, a cell wall modification of the root endodermis that determines an apoplastic barrier between the intraorganismal apoplasm and the extraorganismal apoplasm and prevents lateral diffusion. This is Casparian strip membrane protein 1 from Picea glauca (White spruce).